The primary structure comprises 264 residues: Isoprenyl transferase (264 aa).

D43 is a catalytic residue. D43 contacts Mg(2+). Substrate is bound by residues 44–47, W48, R56, H60, and 88–90; these read GNGR and STE. Catalysis depends on N91, which acts as the Proton acceptor. Substrate contacts are provided by residues W92, R94, R211, and 217–219; that span reads RTS. E230 lines the Mg(2+) pocket.

The protein belongs to the UPP synthase family. As to quaternary structure, homodimer. Requires Mg(2+) as cofactor.

Functionally, catalyzes the condensation of isopentenyl diphosphate (IPP) with allylic pyrophosphates generating different type of terpenoids. The polypeptide is Isoprenyl transferase (Bifidobacterium longum (strain NCC 2705)).